The sequence spans 440 residues: Chromosome partition protein MukF (440 aa).

Residues 208–236 (LSETSGTLRELQDTLEAAGDKLQANLLRI) are leucine-zipper.

This sequence belongs to the MukF family. As to quaternary structure, interacts, and probably forms a ternary complex, with MukE and MukB via its C-terminal region. The complex formation is stimulated by calcium or magnesium. It is required for an interaction between MukE and MukB.

Its subcellular location is the cytoplasm. It is found in the nucleoid. Its function is as follows. Involved in chromosome condensation, segregation and cell cycle progression. May participate in facilitating chromosome segregation by condensation DNA from both sides of a centrally located replisome during cell division. Not required for mini-F plasmid partitioning. Probably acts via its interaction with MukB and MukE. Overexpression results in anucleate cells. It has a calcium binding activity. The chain is Chromosome partition protein MukF from Yersinia enterocolitica serotype O:8 / biotype 1B (strain NCTC 13174 / 8081).